We begin with the raw amino-acid sequence, 157 residues long: V-type proton ATPase 16 kDa proteolipid subunit c (157 aa).

Residues 1 to 10 (MALPEENPVY) are Lumenal-facing. Residues 11 to 33 (GPFFGVMGAAAAIIFSALGAAYG) traverse the membrane as a helical segment. The Cytoplasmic portion of the chain corresponds to 34–55 (TAKSGTGIAAMSVMRPELIMKS). The helical transmembrane segment at 56–76 (IIPVVMAGIIAIYGLVVAVLI) threads the bilayer. At 77-94 (AGSLDTPTKYSLYKGFIH) the chain is on the lumenal side. Residues 95–116 (LGAGLAVGFSGLAAGFAIGIVG) form a helical membrane-spanning segment. Topologically, residues 117-128 (DAGVRGTAQQPR) are cytoplasmic. Residues 129 to 154 (LFVGMILILIFAEVLGLYGLIVAIYL) form a helical membrane-spanning segment. Residues 155 to 157 (YTK) are Lumenal-facing.

This sequence belongs to the V-ATPase proteolipid subunit family. As to quaternary structure, V-ATPase is a heteromultimeric enzyme made up of two complexes: the ATP-hydrolytic V1 complex and the proton translocation V0 complex. The V1 complex consists of three catalytic AB heterodimers that form a heterohexamer, three peripheral stalks each consisting of EG heterodimers, one central rotor including subunits D and F, and the regulatory subunits C and H. The proton translocation complex V0 consists of the proton transport subunit a, a ring of proteolipid subunits c9c'', rotary subunit d, subunits e and f, and the accessory subunits VhaAC45 and ATP6AP2.

The protein resides in the membrane. Proton-conducting pore forming subunit of the V0 complex of vacuolar(H+)-ATPase (V-ATPase), a multisubunit enzyme composed of a peripheral complex (V1) that hydrolyzes ATP and a membrane integral complex (V0) that translocates protons. V-ATPase is responsible for acidifying and maintaining the pH of intracellular compartments and in some cell types, is targeted to the plasma membrane, where it is responsible for acidifying the extracellular environment. The sequence is that of V-type proton ATPase 16 kDa proteolipid subunit c from Aedes aegypti (Yellowfever mosquito).